Here is a 132-residue protein sequence, read N- to C-terminus: Large ribosomal subunit protein uL14 (132 aa).

Belongs to the universal ribosomal protein uL14 family. In terms of assembly, part of the 50S ribosomal subunit. Forms a cluster with proteins L3 and L24e, part of which may contact the 16S rRNA in 2 intersubunit bridges.

Binds to 23S rRNA. Forms part of two intersubunit bridges in the 70S ribosome. This chain is Large ribosomal subunit protein uL14, found in Picrophilus torridus (strain ATCC 700027 / DSM 9790 / JCM 10055 / NBRC 100828 / KAW 2/3).